Reading from the N-terminus, the 253-residue chain is Large ribosomal subunit protein uL4 (253 aa).

The segment at 61–107 is disordered; sequence GWGSGRGTSHVPRLVNSSRAARVPHARGGRRAHPPKPEADRSEKVNT. The segment covering 82–94 has biased composition (basic residues); the sequence is RVPHARGGRRAHP. Residues 95–107 show a composition bias toward basic and acidic residues; the sequence is PKPEADRSEKVNT.

Belongs to the universal ribosomal protein uL4 family. Part of the 50S ribosomal subunit.

Functionally, one of the primary rRNA binding proteins, this protein initially binds near the 5'-end of the 23S rRNA. It is important during the early stages of 50S assembly. It makes multiple contacts with different domains of the 23S rRNA in the assembled 50S subunit and ribosome. Its function is as follows. Forms part of the polypeptide exit tunnel. In Methanosarcina barkeri (strain Fusaro / DSM 804), this protein is Large ribosomal subunit protein uL4.